We begin with the raw amino-acid sequence, 223 residues long: Small ribosomal subunit protein uS3 (223 aa).

A KH type-2 domain is found at 39–117 (IREHLRKKPS…RPELNAKLVA (79 aa)).

It belongs to the universal ribosomal protein uS3 family. As to quaternary structure, part of the 30S ribosomal subunit. Forms a tight complex with proteins S10 and S14.

Functionally, binds the lower part of the 30S subunit head. Binds mRNA in the 70S ribosome, positioning it for translation. The chain is Small ribosomal subunit protein uS3 from Chlamydia felis (strain Fe/C-56) (Chlamydophila felis).